Consider the following 561-residue polypeptide: uncharacterized protein (561 aa).

Helical transmembrane passes span 27–49 (ILEF…GLLI), 54–71 (FFGI…ALAL), 83–105 (LVYQ…SEFF), 115–137 (LTLF…IKLF), 142–162 (IIGA…AAMV), and 177–199 (VVGY…AIGA). Residues 292 to 373 (QQDVPIEDTD…MSEVRRFLGD (82 aa)) form the RCK C-terminal domain. A run of 4 helical transmembrane segments spans residues 383–405 (LMPF…PLPG), 409–428 (LSLG…GALN), 441–463 (ASRT…SAGV), and 478–500 (IAGG…MPLF).

Belongs to the AAE transporter (TC 2.A.81) family.

It is found in the cell membrane. This is an uncharacterized protein from Corynebacterium diphtheriae (strain ATCC 700971 / NCTC 13129 / Biotype gravis).